The following is a 159-amino-acid chain: Transcriptional repressor NrdR (159 aa).

Polar residues predominate over residues 1–11 (MQCPTCQNTDS). The tract at residues 1 to 21 (MQCPTCQNTDSRVLESRSADS) is disordered. The segment at 3–34 (CPTCQNTDSRVLESRSADSGKSVRRRRECLNC) is a zinc-finger region. One can recognise an ATP-cone domain in the interval 49 to 139 (VSVLKKDGGR…VYRKFNGVKD (91 aa)).

It belongs to the NrdR family. It depends on Zn(2+) as a cofactor.

Negatively regulates transcription of bacterial ribonucleotide reductase nrd genes and operons by binding to NrdR-boxes. This Prochlorococcus marinus (strain AS9601) protein is Transcriptional repressor NrdR.